Consider the following 325-residue polypeptide: MAKKIAILTSGGDSPGMNNAIRTIVKTSKIHGIEVFLVYNGYKGLVEKTIKNANEINVDQYIGSGGTFIGSARYLEFKKLEVRQKAVQNLKEMGIDSLVVIGGDGSYAGAQLLHELGVKTIGLPGTIDNDIASTEYTIGLDTALNTIVENVDRLRDTMNSMNMVALVEVMGHGAGDLAMLSGLATGAEIIVTNAHRKSIDEMIEIVKDQMIAKTKRSVIGIVSEFIYDDLKKVAKEIEDKTGIRTRAIILAHTQRGGNPKAYERINASFLGIAAVESLLKNESGVALGFKGNKIISTPIPEALKAQNSAKNENELVTKINKINQS.

Gly-12 serves as a coordination point for ATP. 22-26 is a binding site for ADP; that stretch reads RTIVK. ATP contacts are provided by residues 73-74 and 103-106; these read RY and GDGS. A Mg(2+)-binding site is contributed by Asp-104. 126–128 is a substrate binding site; sequence TID. The Proton acceptor role is filled by Asp-128. Position 155 (Arg-155) interacts with ADP. 170–172 serves as a coordination point for substrate; it reads MGH. Residues 186–188, Lys-213, and 215–217 each bind ADP; these read GAE and KRS. Substrate contacts are provided by residues Glu-224, Arg-246, and 252 to 255; that span reads HTQR.

It belongs to the phosphofructokinase type A (PFKA) family. ATP-dependent PFK group I subfamily. Prokaryotic clade 'B1' sub-subfamily. As to quaternary structure, homotetramer. Mg(2+) serves as cofactor.

The protein localises to the cytoplasm. It catalyses the reaction beta-D-fructose 6-phosphate + ATP = beta-D-fructose 1,6-bisphosphate + ADP + H(+). It functions in the pathway carbohydrate degradation; glycolysis; D-glyceraldehyde 3-phosphate and glycerone phosphate from D-glucose: step 3/4. Its activity is regulated as follows. Allosterically activated by ADP and other diphosphonucleosides, and allosterically inhibited by phosphoenolpyruvate. Its function is as follows. Catalyzes the phosphorylation of D-fructose 6-phosphate to fructose 1,6-bisphosphate by ATP, the first committing step of glycolysis. The protein is ATP-dependent 6-phosphofructokinase of Mycoplasma mobile (strain ATCC 43663 / 163K / NCTC 11711) (Mesomycoplasma mobile).